Consider the following 522-residue polypeptide: BTB/POZ domain-containing protein 3 (522 aa).

The segment at 25-44 (RSKKSSKKANTSSSSSNSSK) is disordered. A compositionally biased stretch (low complexity) spans 32–44 (KANTSSSSSNSSK). Positions 120–190 (ADVHFVVGPP…IYCDEIDLAA (71 aa)) constitute a BTB domain. Positions 235 to 300 (FEEPDLTQRC…NWAEVECQRQ (66 aa)) constitute a BACK domain.

Its subcellular location is the cytoplasm. It is found in the cytosol. It localises to the nucleus. Its function is as follows. Acts as a key regulator of dendritic field orientation during development of sensory cortex. Also directs dendrites toward active axon terminals when ectopically expressed. The polypeptide is BTB/POZ domain-containing protein 3 (BTBD3) (Homo sapiens (Human)).